The following is a 162-amino-acid chain: MADSSFDIVSKVERQEVDNALNQAAKEISQRYDFKNVGASIAWSGEKILMQANSEERVKAILDVFETKLIKRGISLKALDAGEPQLSGKEYKIFASIEEGISQENAKKVAKVIRDEGPKGVKAQVQGDELRVSSKSRDDLQAVQALLKGQDFDFALQFVNYR.

The protein belongs to the YajQ family.

Its function is as follows. Nucleotide-binding protein. The protein is Nucleotide-binding protein SAV_4896 of Streptomyces avermitilis (strain ATCC 31267 / DSM 46492 / JCM 5070 / NBRC 14893 / NCIMB 12804 / NRRL 8165 / MA-4680).